Reading from the N-terminus, the 212-residue chain is Glycerol-3-phosphate acyltransferase (212 aa).

Transmembrane regions (helical) follow at residues 10–30 (FAALLIVLAYLIGCVPFAVVV), 90–110 (GYGLVLIAVFLGHLYPVSLGF), 124–144 (FAVSPWLALATVATWLLVAVV), 150–170 (LAALVAAFLAPVYYFFGGGTI), and 171–191 (WPLNAPTAAALVGVSALLFYR).

It belongs to the PlsY family. In terms of assembly, probably interacts with PlsX.

It localises to the cell inner membrane. It carries out the reaction an acyl phosphate + sn-glycerol 3-phosphate = a 1-acyl-sn-glycero-3-phosphate + phosphate. Its pathway is lipid metabolism; phospholipid metabolism. In terms of biological role, catalyzes the transfer of an acyl group from acyl-phosphate (acyl-PO(4)) to glycerol-3-phosphate (G3P) to form lysophosphatidic acid (LPA). This enzyme utilizes acyl-phosphate as fatty acyl donor, but not acyl-CoA or acyl-ACP. This is Glycerol-3-phosphate acyltransferase from Bordetella avium (strain 197N).